A 350-amino-acid polypeptide reads, in one-letter code: Protein RecA (350 aa).

68-75 (GPESSGKT) is a binding site for ATP.

This sequence belongs to the RecA family.

It localises to the cytoplasm. Can catalyze the hydrolysis of ATP in the presence of single-stranded DNA, the ATP-dependent uptake of single-stranded DNA by duplex DNA, and the ATP-dependent hybridization of homologous single-stranded DNAs. It interacts with LexA causing its activation and leading to its autocatalytic cleavage. This Mycolicibacterium vanbaalenii (strain DSM 7251 / JCM 13017 / BCRC 16820 / KCTC 9966 / NRRL B-24157 / PYR-1) (Mycobacterium vanbaalenii) protein is Protein RecA.